Here is a 366-residue protein sequence, read N- to C-terminus: Alanine racemase (366 aa).

The active-site Proton acceptor; specific for D-alanine is the K33. An N6-(pyridoxal phosphate)lysine modification is found at K33. R129 is a binding site for substrate. Y253 serves as the catalytic Proton acceptor; specific for L-alanine. M301 contributes to the substrate binding site.

The protein belongs to the alanine racemase family. Requires pyridoxal 5'-phosphate as cofactor.

The enzyme catalyses L-alanine = D-alanine. It functions in the pathway amino-acid biosynthesis; D-alanine biosynthesis; D-alanine from L-alanine: step 1/1. Functionally, catalyzes the interconversion of L-alanine and D-alanine. May also act on other amino acids. The protein is Alanine racemase (alr) of Xanthomonas oryzae pv. oryzae (strain MAFF 311018).